The following is a 117-amino-acid chain: NADH-ubiquinone oxidoreductase chain 3 (117 aa).

Helical transmembrane passes span 1–21 (MKFI…LLLL), 58–78 (FLMT…LPII), and 86–106 (TMIS…TLIL).

This sequence belongs to the complex I subunit 3 family.

Its subcellular location is the mitochondrion membrane. The enzyme catalyses a ubiquinone + NADH + 5 H(+)(in) = a ubiquinol + NAD(+) + 4 H(+)(out). Core subunit of the mitochondrial membrane respiratory chain NADH dehydrogenase (Complex I) that is believed to belong to the minimal assembly required for catalysis. Complex I functions in the transfer of electrons from NADH to the respiratory chain. The immediate electron acceptor for the enzyme is believed to be ubiquinone. This Apis mellifera ligustica (Common honeybee) protein is NADH-ubiquinone oxidoreductase chain 3 (ND3).